Consider the following 826-residue polypeptide: Golgin subfamily A member 6-like protein 25 (826 aa).

Disordered stretches follow at residues 1–100, 297–327, 345–425, 502–534, 547–646, and 658–826; these read MWPQ…HQEA, QEQE…MRRQ, MHEQ…EMWR, QEEM…MWRQ, RQEE…EQEE, and QEEM…MQEH. Residues 31-52 show a composition bias toward basic and acidic residues; it reads MSKETRQSKLAEAKEQLTDHHP. 2 stretches are compositionally biased toward polar residues: residues 53-63 and 71-83; these read QTNPSVGTAAS and NNGT…TSGG. Positions 86 to 100 are enriched in basic and acidic residues; sequence SPEDEQKASHQHQEA. Residues 157–822 adopt a coiled-coil conformation; the sequence is LEQALSAVAT…EVRLRQQEEK (666 aa). Composition is skewed to basic and acidic residues over residues 658 to 678 and 686 to 826; these read QEEM…KMWE and QEEK…MQEH.

Belongs to the GOLGA6 family.

In Homo sapiens (Human), this protein is Golgin subfamily A member 6-like protein 25.